We begin with the raw amino-acid sequence, 302 residues long: uncharacterized protein (302 aa).

In terms of domain architecture, HTH lysR-type spans 1-60 (MRMNMSDFATFFAVARNQSFRAAGDELGLSSSAISHSIKTLEQRLKIRLFNRTTRSVSLT). A DNA-binding region (H-T-H motif) is located at residues 20–40 (FRAAGDELGLSSSAISHSIKT).

This sequence belongs to the LysR transcriptional regulatory family.

This is an uncharacterized protein from Escherichia coli (strain K12).